The following is a 273-amino-acid chain: 2,3,4,5-tetrahydropyridine-2,6-dicarboxylate N-succinyltransferase (273 aa).

Positions 104 and 141 each coordinate substrate.

It belongs to the transferase hexapeptide repeat family. Homotrimer.

It is found in the cytoplasm. It carries out the reaction (S)-2,3,4,5-tetrahydrodipicolinate + succinyl-CoA + H2O = (S)-2-succinylamino-6-oxoheptanedioate + CoA. It functions in the pathway amino-acid biosynthesis; L-lysine biosynthesis via DAP pathway; LL-2,6-diaminopimelate from (S)-tetrahydrodipicolinate (succinylase route): step 1/3. In Neisseria meningitidis serogroup A / serotype 4A (strain DSM 15465 / Z2491), this protein is 2,3,4,5-tetrahydropyridine-2,6-dicarboxylate N-succinyltransferase.